We begin with the raw amino-acid sequence, 100 residues long: Urease subunit gamma (100 aa).

The protein belongs to the urease gamma subunit family. As to quaternary structure, heterotrimer of UreA (gamma), UreB (beta) and UreC (alpha) subunits. Three heterotrimers associate to form the active enzyme.

The protein localises to the cytoplasm. It carries out the reaction urea + 2 H2O + H(+) = hydrogencarbonate + 2 NH4(+). Its pathway is nitrogen metabolism; urea degradation; CO(2) and NH(3) from urea (urease route): step 1/1. The polypeptide is Urease subunit gamma (Saccharophagus degradans (strain 2-40 / ATCC 43961 / DSM 17024)).